Here is a 183-residue protein sequence, read N- to C-terminus: ATP-dependent protease subunit HslV (183 aa).

Threonine 2 is a catalytic residue. 3 residues coordinate Na(+): alanine 157, cysteine 160, and threonine 163.

This sequence belongs to the peptidase T1B family. HslV subfamily. A double ring-shaped homohexamer of HslV is capped on each side by a ring-shaped HslU homohexamer. The assembly of the HslU/HslV complex is dependent on binding of ATP.

The protein localises to the cytoplasm. It catalyses the reaction ATP-dependent cleavage of peptide bonds with broad specificity.. Its activity is regulated as follows. Allosterically activated by HslU binding. Functionally, protease subunit of a proteasome-like degradation complex believed to be a general protein degrading machinery. This chain is ATP-dependent protease subunit HslV, found in Marinomonas sp. (strain MWYL1).